The primary structure comprises 385 residues: Protein pelota homolog (385 aa).

Belongs to the eukaryotic release factor 1 family. Pelota subfamily. In terms of assembly, component of the Pelota-HBS1L complex, also named Dom34-Hbs1 complex, composed of PELO and HBS1L. Requires a divalent metal cation as cofactor.

It is found in the cytoplasm. In terms of biological role, component of the Pelota-HBS1L complex, a complex that recognizes stalled ribosomes and triggers the No-Go Decay (NGD) pathway. In the Pelota-HBS1L complex, PELO recognizes ribosomes stalled at the 3' end of an mRNA and engages stalled ribosomes by destabilizing mRNA in the mRNA channel. Following mRNA extraction from stalled ribosomes by the SKI complex, the Pelota-HBS1L complex promotes recruitment of ABCE1, which drives the disassembly of stalled ribosomes, followed by degradation of damaged mRNAs as part of the NGD pathway. The protein is Protein pelota homolog (PELO) of Gallus gallus (Chicken).